The primary structure comprises 37 residues: Large ribosomal subunit protein bL36c (37 aa).

Belongs to the bacterial ribosomal protein bL36 family.

It is found in the plastid. It localises to the chloroplast. The chain is Large ribosomal subunit protein bL36c from Pleurastrum terricola (Filamentous green alga).